Reading from the N-terminus, the 322-residue chain is Methionyl-tRNA formyltransferase (322 aa).

112-115 (SLLP) is a (6S)-5,6,7,8-tetrahydrofolate binding site.

The protein belongs to the Fmt family.

The catalysed reaction is L-methionyl-tRNA(fMet) + (6R)-10-formyltetrahydrofolate = N-formyl-L-methionyl-tRNA(fMet) + (6S)-5,6,7,8-tetrahydrofolate + H(+). Its function is as follows. Attaches a formyl group to the free amino group of methionyl-tRNA(fMet). The formyl group appears to play a dual role in the initiator identity of N-formylmethionyl-tRNA by promoting its recognition by IF2 and preventing the misappropriation of this tRNA by the elongation apparatus. The polypeptide is Methionyl-tRNA formyltransferase (Synechococcus sp. (strain JA-2-3B'a(2-13)) (Cyanobacteria bacterium Yellowstone B-Prime)).